Reading from the N-terminus, the 274-residue chain is Nitrate import ATP-binding protein NrtD (274 aa).

The ABC transporter domain occupies 17 to 250 (LHFDCVGKTF…RPREREAVVE (234 aa)). ATP is bound at residue 53-60 (GHSGCGKS).

Belongs to the ABC transporter superfamily. Nitrate/nitrite/cyanate uptake transporter (NitT) (TC 3.A.1.16) family. As to quaternary structure, the complex is composed of two ATP-binding proteins (NrtC and NrtD), two transmembrane proteins (NrtB) and a solute-binding protein (NrtA).

It is found in the cell inner membrane. It carries out the reaction nitrate(out) + ATP + H2O = nitrate(in) + ADP + phosphate + H(+). Functionally, part of the ABC transporter complex NrtABCD involved in nitrate uptake. The complex is probably also involved in nitrite transport. Probably responsible for energy coupling to the transport system. This is Nitrate import ATP-binding protein NrtD from Synechococcus elongatus (strain ATCC 33912 / PCC 7942 / FACHB-805) (Anacystis nidulans R2).